Reading from the N-terminus, the 293-residue chain is ATP synthase gamma chain (293 aa).

This sequence belongs to the ATPase gamma chain family. F-type ATPases have 2 components, CF(1) - the catalytic core - and CF(0) - the membrane proton channel. CF(1) has five subunits: alpha(3), beta(3), gamma(1), delta(1), epsilon(1). CF(0) has three main subunits: a, b and c.

Its subcellular location is the cell membrane. Functionally, produces ATP from ADP in the presence of a proton gradient across the membrane. The gamma chain is believed to be important in regulating ATPase activity and the flow of protons through the CF(0) complex. The sequence is that of ATP synthase gamma chain from Streptococcus sanguinis.